The primary structure comprises 947 residues: Serine/threonine-protein kinase PKH2 (947 aa).

Positions 1–14 (MHKFRYSLHQHYSK) are enriched in basic residues. Disordered regions lie at residues 1–43 (MHKF…SSSS), 108–132 (SLGN…LSSH), and 162–212 (FNHL…NEEN). Residues 108 to 117 (SLGNTTNETG) show a composition bias toward polar residues. A compositionally biased stretch (acidic residues) spans 187–198 (NTEEEENNDDTD). The segment covering 199 to 212 (EIPKSETLKQNEEN) has biased composition (basic and acidic residues). Positions 240 to 502 (FKFGKELGEG…IPEIQKHYFF (263 aa)) constitute a Protein kinase domain. Residues 250–252 (SYS) and Lys269 contribute to the ATP site. The tract at residues 271–316 (LDKRHIIKEKKVKYVNIEKHALNRLSNRLGVISLYFTFQDKDSLYF) is PIF-pocket. Residues 319 to 321 (DYA) and Glu325 contribute to the ATP site. Asp364 functions as the Proton acceptor in the catalytic mechanism. 2 residues coordinate ATP: Glu368 and Asp382. Composition is skewed to low complexity over residues 550-579 (VKKS…KGSS) and 618-632 (SSTS…SNSN). Disordered stretches follow at residues 550 to 598 (VKKS…STEK), 611 to 644 (KPAT…QQDY), 660 to 686 (SVGS…IHQQ), and 794 to 816 (NMKR…ASTS). Residues 802-811 (DSKKSMDIER) are compositionally biased toward basic and acidic residues.

It belongs to the protein kinase superfamily. AGC Ser/Thr protein kinase family. PDPK1 subfamily.

Its subcellular location is the nucleus. The protein localises to the cytoplasm. The protein resides in the cell cortex. The enzyme catalyses L-seryl-[protein] + ATP = O-phospho-L-seryl-[protein] + ADP + H(+). It catalyses the reaction L-threonyl-[protein] + ATP = O-phospho-L-threonyl-[protein] + ADP + H(+). Functionally, serine/threonine-protein kinase which is part sphingolipid-mediated signaling pathway that is required for the internalization step of endocytosis by regulating eisosome assembly and organization, and modulating the organization of the plasma membrane. Phosphorylates and activates PKC1. Activates YPK1 and YPK2, 2 components of signaling cascade required for maintenance of cell wall integrity. Required for stress-induced P-body assembly and regulates global mRNA decay at the deadenylation step. This Candida albicans (strain SC5314 / ATCC MYA-2876) (Yeast) protein is Serine/threonine-protein kinase PKH2.